Reading from the N-terminus, the 342-residue chain is S-adenosylmethionine:tRNA ribosyltransferase-isomerase (342 aa).

It belongs to the QueA family. Monomer.

It is found in the cytoplasm. It carries out the reaction 7-aminomethyl-7-carbaguanosine(34) in tRNA + S-adenosyl-L-methionine = epoxyqueuosine(34) in tRNA + adenine + L-methionine + 2 H(+). Its pathway is tRNA modification; tRNA-queuosine biosynthesis. Functionally, transfers and isomerizes the ribose moiety from AdoMet to the 7-aminomethyl group of 7-deazaguanine (preQ1-tRNA) to give epoxyqueuosine (oQ-tRNA). This chain is S-adenosylmethionine:tRNA ribosyltransferase-isomerase, found in Zymomonas mobilis subsp. mobilis (strain ATCC 31821 / ZM4 / CP4).